The following is a 391-amino-acid chain: Polyketide synthase 3 (391 aa).

Cys164 is a catalytic residue.

It belongs to the thiolase-like superfamily. Chalcone/stilbene synthases family. In terms of assembly, homodimer.

The enzyme catalyses (E)-4-coumaroyl-CoA + 3 malonyl-CoA + 3 H(+) = 2',4,4',6'-tetrahydroxychalcone + 3 CO2 + 4 CoA. Its pathway is secondary metabolite biosynthesis; flavonoid biosynthesis. In terms of biological role, polyketide synthase producing p-coumaryltriacetic acid lactone (CTAL) and slightly naringenin chalcone. Can use p-coumaryl-CoA as substrate. In Rubus idaeus (Raspberry), this protein is Polyketide synthase 3 (PKS3).